Consider the following 963-residue polypeptide: Iron-responsive element-binding protein 2 (963 aa).

[4Fe-4S] cluster contacts are provided by cysteine 512, cysteine 578, and cysteine 581.

This sequence belongs to the aconitase/IPM isomerase family. Interacts with RBCK1 only in iron-rich conditions. Interacts (when associated with the 4Fe-4S) with FBXL5. Interacts with CIAO1 and CIAO2A. [4Fe-4S] cluster serves as cofactor. In terms of processing, ubiquitinated and degraded by the proteasome in presence of high level of iron and oxygen. Ubiquitinated by a SCF complex containing FBXL5. Upon iron and oxygen depletion FBXL5 is degraded, preventing ubiquitination and allowing its RNA-binding activity. As to expression, ubiquitously expressed in rat tissues, the highest amounts present in skeletal muscle and heart.

It localises to the cytoplasm. Functionally, RNA-binding protein that binds to iron-responsive elements (IRES), which are stem-loop structures found in the 5'-UTR of ferritin, and delta aminolevulinic acid synthase mRNAs, and in the 3'-UTR of transferrin receptor mRNA. Binding to the IRE element in ferritin results in the repression of its mRNA translation. Binding of the protein to the transferrin receptor mRNA inhibits the degradation of this otherwise rapidly degraded mRNA. This Rattus norvegicus (Rat) protein is Iron-responsive element-binding protein 2 (Ireb2).